A 153-amino-acid polypeptide reads, in one-letter code: General odorant-binding protein lush (153 aa).

Positions 1-29 (MKHWKRRSSAVFAIVLQVLVLLLPDPAVA) are cleaved as a signal peptide. Cystine bridges form between cysteine 46–cysteine 79, cysteine 75–cysteine 132, and cysteine 121–cysteine 141. Serine 81 and threonine 86 together coordinate 1-propanol. Butan-1-ol-binding residues include serine 81 and threonine 86. Positions 81 and 86 each coordinate ethanol.

The protein belongs to the PBP/GOBP family. As to expression, specifically expressed in chemosensory system in both males and females. Expressed in a subset of trichoid chemosensory sensilla located on the ventral-lateral surface of the third antennal segment. Secreted from non-neuronal support cells into the sensillum lymph that bathes the olfactory neurons within these sensilla.

Its subcellular location is the secreted. Functionally, odorant-binding protein required for olfactory behavior and for activity of pheromone-sensitive neurons. Binds to alcohols and mediates avoidance behavior to high concentrations of alcohols, the alcohol-binding possibly resulting in activation of receptors on T2B neurons, the activation of these receptors inhibiting these neurons. Acts in concert with Snmp and lush to capture cVA molecules on the surface of Or67d expressing olfactory dendrites and facilitate their transfer to the odorant-receptor Orco complex. Required for cVA response, probably by binding to VA. May act by serving as an adapter that bridges the presence of gaseous pheromone molecules, cVA, to activation of specific neuronal receptors expressed on T1 olfactory neurons, possibly via a specific conformational change induced by cVA that in turn activates T1 receptors. T1 neurons are excited by the pheromone VA, while T2 neurons are inhibited by alcohols. Also binds to phthalates. In Drosophila melanogaster (Fruit fly), this protein is General odorant-binding protein lush (lush).